Reading from the N-terminus, the 334-residue chain is GTP 3',8-cyclase (334 aa).

The Radical SAM core domain occupies 11–236 (GFNRKIDYLR…ESTESSQGPA (226 aa)). Arginine 20 is a binding site for GTP. Cysteine 27 and cysteine 31 together coordinate [4Fe-4S] cluster. Tyrosine 33 is an S-adenosyl-L-methionine binding site. Cysteine 34 serves as a coordination point for [4Fe-4S] cluster. Residue arginine 69 coordinates GTP. Glycine 73 contributes to the S-adenosyl-L-methionine binding site. Threonine 100 contacts GTP. S-adenosyl-L-methionine is bound at residue serine 124. Lysine 161 lines the GTP pocket. Methionine 195 contacts S-adenosyl-L-methionine. Residues cysteine 260 and cysteine 263 each contribute to the [4Fe-4S] cluster site. 265–267 (RVR) contacts GTP. Cysteine 277 provides a ligand contact to [4Fe-4S] cluster.

It belongs to the radical SAM superfamily. MoaA family. Monomer and homodimer. [4Fe-4S] cluster serves as cofactor.

It catalyses the reaction GTP + AH2 + S-adenosyl-L-methionine = (8S)-3',8-cyclo-7,8-dihydroguanosine 5'-triphosphate + 5'-deoxyadenosine + L-methionine + A + H(+). It participates in cofactor biosynthesis; molybdopterin biosynthesis. Its function is as follows. Catalyzes the cyclization of GTP to (8S)-3',8-cyclo-7,8-dihydroguanosine 5'-triphosphate. This chain is GTP 3',8-cyclase, found in Pseudomonas putida (strain W619).